Consider the following 137-residue polypeptide: Phospholipase A2 homolog PLA2-03 (137 aa).

A signal peptide spans 1 to 16 (MRTLWIVAVLLVGVEG). Intrachain disulfides connect C42/C131, C44/C60, C59/C111, C65/C137, C66/C104, C73/C97, and C91/C102. Residues 121 to 133 (KKYKIFPKFLCKK) are important for membrane-damaging activities in eukaryotes and bacteria; heparin-binding.

This sequence belongs to the phospholipase A2 family. Group II subfamily. K49 sub-subfamily. In terms of tissue distribution, expressed by the venom gland.

Its subcellular location is the secreted. Its function is as follows. Snake venom phospholipase A2 homolog that lacks enzymatic activity. Is myotoxic and displays edema-inducing activities in mouse paw. A model of myotoxic mechanism has been proposed: an apo Lys49-PLA2 is activated by the entrance of a hydrophobic molecule (e.g. fatty acid) at the hydrophobic channel of the protein leading to a reorientation of a monomer. This reorientation causes a transition between 'inactive' to 'active' states, causing alignment of C-terminal and membrane-docking sites (MDoS) side-by-side and putting the membrane-disruption sites (MDiS) in the same plane, exposed to solvent and in a symmetric position for both monomers. The MDoS region stabilizes the toxin on membrane by the interaction of charged residues with phospholipid head groups. Subsequently, the MDiS region destabilizes the membrane with penetration of hydrophobic residues. This insertion causes a disorganization of the membrane, allowing an uncontrolled influx of ions (i.e. calcium and sodium), and eventually triggering irreversible intracellular alterations and cell death. This Ovophis okinavensis (Ryukyu Island pit viper) protein is Phospholipase A2 homolog PLA2-03.